A 186-amino-acid chain; its full sequence is FMN reductase (NADPH) (186 aa).

It belongs to the SsuE family.

It carries out the reaction FMNH2 + NADP(+) = FMN + NADPH + 2 H(+). The protein is FMN reductase (NADPH) (msuE) of Pseudomonas aeruginosa (strain ATCC 15692 / DSM 22644 / CIP 104116 / JCM 14847 / LMG 12228 / 1C / PRS 101 / PAO1).